The chain runs to 209 residues: Octanoyltransferase (209 aa).

In terms of domain architecture, BPL/LPL catalytic spans 30–209 (VNEPEIVYLV…IQTEFNKIFT (180 aa)). Residues 69-76 (RGGKFTFH), 143-145 (AIG), and 156-158 (GVA) contribute to the substrate site. The active-site Acyl-thioester intermediate is Cys-174.

This sequence belongs to the LipB family.

It localises to the cytoplasm. The catalysed reaction is octanoyl-[ACP] + L-lysyl-[protein] = N(6)-octanoyl-L-lysyl-[protein] + holo-[ACP] + H(+). It participates in protein modification; protein lipoylation via endogenous pathway; protein N(6)-(lipoyl)lysine from octanoyl-[acyl-carrier-protein]: step 1/2. Its function is as follows. Catalyzes the transfer of endogenously produced octanoic acid from octanoyl-acyl-carrier-protein onto the lipoyl domains of lipoate-dependent enzymes. Lipoyl-ACP can also act as a substrate although octanoyl-ACP is likely to be the physiological substrate. This Rickettsia canadensis (strain McKiel) protein is Octanoyltransferase.